A 128-amino-acid polypeptide reads, in one-letter code: RxLR effector protein SFI2 (128 aa).

The first 22 residues, 1–22, serve as a signal peptide directing secretion; sequence MRSAFYIFLVVAVLARCSVVAA. The RxLR-dEER motif lies at 52-71; it reads RLLRVAGREDDDATTDEEDR.

Belongs to the RxLR effector family.

Its subcellular location is the secreted. The protein localises to the host nucleus. Functionally, effector that suppresses flg22-induced post-translational MAP kinase activation both tomato and Arabidopsis. The perception of highly conserved pathogen- or microbe-associated molecular patterns (PAMPs/MAMPs), such as flg22, triggers converging signaling pathways recruiting MAP kinase cascades and inducing transcriptional re-programming, yielding a generic antimicrobial response. The polypeptide is RxLR effector protein SFI2 (Phytophthora infestans (strain T30-4) (Potato late blight agent)).